Consider the following 689-residue polypeptide: Glycine--tRNA ligase beta subunit (689 aa).

It belongs to the class-II aminoacyl-tRNA synthetase family. In terms of assembly, tetramer of two alpha and two beta subunits.

The protein localises to the cytoplasm. The catalysed reaction is tRNA(Gly) + glycine + ATP = glycyl-tRNA(Gly) + AMP + diphosphate. The polypeptide is Glycine--tRNA ligase beta subunit (Dichelobacter nodosus (strain VCS1703A)).